The sequence spans 156 residues: Sec-independent protein translocase protein TatB (156 aa).

The helical transmembrane segment at 2 to 22 (FSSVGWGEIFLLVVVGLVVIG) threads the bilayer. The segment at 100 to 156 (KIMAEGTEGEAQRNKQAADNNANVVERPADGSTARPTQNDPKDGPNYSGGVSWTDII) is disordered. Over residues 113–122 (NKQAADNNAN) the composition is skewed to polar residues.

This sequence belongs to the TatB family. The Tat system comprises two distinct complexes: a TatABC complex, containing multiple copies of TatA, TatB and TatC subunits, and a separate TatA complex, containing only TatA subunits. Substrates initially bind to the TatABC complex, which probably triggers association of the separate TatA complex to form the active translocon.

The protein localises to the cell membrane. Functionally, part of the twin-arginine translocation (Tat) system that transports large folded proteins containing a characteristic twin-arginine motif in their signal peptide across membranes. Together with TatC, TatB is part of a receptor directly interacting with Tat signal peptides. TatB may form an oligomeric binding site that transiently accommodates folded Tat precursor proteins before their translocation. The sequence is that of Sec-independent protein translocase protein TatB from Corynebacterium glutamicum (strain ATCC 13032 / DSM 20300 / JCM 1318 / BCRC 11384 / CCUG 27702 / LMG 3730 / NBRC 12168 / NCIMB 10025 / NRRL B-2784 / 534).